We begin with the raw amino-acid sequence, 513 residues long: ATP synthase subunit alpha 1 (513 aa).

169-176 (GDRQCGKT) lines the ATP pocket.

Belongs to the ATPase alpha/beta chains family. In terms of assembly, F-type ATPases have 2 components, CF(1) - the catalytic core - and CF(0) - the membrane proton channel. CF(1) has five subunits: alpha(3), beta(3), gamma(1), delta(1), epsilon(1). CF(0) has three main subunits: a(1), b(2) and c(9-12). The alpha and beta chains form an alternating ring which encloses part of the gamma chain. CF(1) is attached to CF(0) by a central stalk formed by the gamma and epsilon chains, while a peripheral stalk is formed by the delta and b chains.

The protein resides in the cell inner membrane. The enzyme catalyses ATP + H2O + 4 H(+)(in) = ADP + phosphate + 5 H(+)(out). Its function is as follows. Produces ATP from ADP in the presence of a proton gradient across the membrane. The alpha chain is a regulatory subunit. In Burkholderia pseudomallei (strain 1710b), this protein is ATP synthase subunit alpha 1.